The following is a 66-amino-acid chain: Jindongenin-1a (66 aa).

The first 22 residues, 1–22 (MFTLKKPLLLLFFLGTVSLSLC), serve as a signal peptide directing secretion. A propeptide spanning residues 23 to 40 (EQERAADDDEGEVIEEEV) is cleaved from the precursor. Cys-60 and Cys-66 are disulfide-bonded.

As to expression, expressed by the skin glands.

Its subcellular location is the secreted. In terms of biological role, displays broad-spectrum antibacterial activity against a range of Gram-positive and Gram-negative bacteria. Also displays antifungal activity against C.albicans ATCC 2002. Has low hemolytic activity, low cytotoxicity and low antioxidant activity. In Amolops jingdongensis (Chinese torrent frog), this protein is Jindongenin-1a.